Consider the following 264-residue polypeptide: Major prion protein (264 aa).

The first 24 residues, methionine 1–cysteine 24, serve as a signal peptide directing secretion. The interval lysine 25–tyrosine 41 is interaction with ADGRG6. Residues lysine 25–alanine 241 form an interaction with GRB2, ERI3 and SYN1 region. The tract at residues proline 28–asparagine 119 is disordered. 6 consecutive repeat copies span residues proline 54–glutamine 62, proline 63–glutamine 70, proline 71–glutamine 78, proline 79–glutamine 86, proline 87–glutamine 94, and proline 95–glutamine 103. The segment at proline 54–glutamine 103 is 6 X 8 AA tandem repeats of P-H-G-G-G-W-G-Q. Over residues glutamine 55–histidine 107 the composition is skewed to gly residues. Cu(2+) is bound by residues histidine 72, glycine 73, glycine 74, histidine 80, glycine 81, glycine 82, histidine 88, glycine 89, glycine 90, histidine 96, glycine 98, and glycine 99. An intrachain disulfide couples cysteine 190 to cysteine 225. Residues asparagine 192 and asparagine 208 are each glycosylated (N-linked (GlcNAc...) asparagine). A lipid anchor (GPI-anchor amidated alanine) is attached at alanine 241. Positions serine 242–glycine 264 are cleaved as a propeptide — removed in mature form.

Belongs to the prion family. As to quaternary structure, monomer and homodimer. Has a tendency to aggregate into amyloid fibrils containing a cross-beta spine, formed by a steric zipper of superposed beta-strands. Soluble oligomers may represent an intermediate stage on the path to fibril formation. Copper binding may promote oligomerization. Interacts with GRB2, APP, ERI3/PRNPIP and SYN1. Mislocalized cytosolically exposed PrP interacts with MGRN1; this interaction alters MGRN1 subcellular location and causes lysosomal enlargement. Interacts with APP. Interacts with KIAA1191. Interacts with ADGRG6.

Its subcellular location is the cell membrane. The protein localises to the golgi apparatus. Its primary physiological function is unclear. May play a role in neuronal development and synaptic plasticity. May be required for neuronal myelin sheath maintenance. May promote myelin homeostasis through acting as an agonist for ADGRG6 receptor. May play a role in iron uptake and iron homeostasis. Soluble oligomers are toxic to cultured neuroblastoma cells and induce apoptosis (in vitro). Association with GPC1 (via its heparan sulfate chains) targets PRNP to lipid rafts. Also provides Cu(2+) or Zn(2+) for the ascorbate-mediated GPC1 deaminase degradation of its heparan sulfate side chains. The sequence is that of Major prion protein (PRNP) from Bos indicus x Bos taurus (Hybrid cattle).